The primary structure comprises 85 residues: V-type proton ATPase subunit f (85 aa).

The Lumenal portion of the chain corresponds to 1–10 (MRPVVSTGKA). A helical membrane pass occupies residues 11 to 31 (WCCTVLSAFGVVILSVIAHLF). The Cytoplasmic segment spans residues 32-54 (NTNHESFVGSINDPEDGPAVAHT). A helical transmembrane segment spans residues 55–75 (VYLAALVYLVFFVFCGFQVYL). Residues 76-85 (ARRKPSIELR) lie on the Lumenal side of the membrane.

In terms of assembly, V-ATPase is a heteromultimeric enzyme composed of a peripheral catalytic V1 complex (components A to H) attached to an integral membrane V0 proton pore complex (components: a, c, c', c'', d, e, f and VOA1).

The protein resides in the endoplasmic reticulum membrane. The protein localises to the vacuole membrane. Functionally, accessory component of the V0 complex of vacuolar(H+)-ATPase (V-ATPase), a multisubunit enzyme composed of a peripheral complex (V1) that hydrolyzes ATP and a membrane integral complex (V0) that translocates protons. V-ATPase is responsible for acidifying and maintaining the pH of intracellular compartments. This Saccharomyces cerevisiae (strain ATCC 204508 / S288c) (Baker's yeast) protein is V-type proton ATPase subunit f.